Here is a 718-residue protein sequence, read N- to C-terminus: Quinolinate synthase, chloroplastic (718 aa).

The segment covering 1–22 (MALALSVAPTSSSLSSLLSRTP) has biased composition (low complexity). Residues 1–29 (MALALSVAPTSSSLSSLLSRTPNPSPNFR) form a disordered region. The transit peptide at 1–70 (MALALSVAPT…VNASPFSISA (70 aa)) directs the protein to the chloroplast. Catalysis depends on Cys-132, which acts as the Cysteine persulfide intermediate. Iminosuccinate contacts are provided by His-280 and Ser-306. Residue Cys-360 coordinates [4Fe-4S] cluster. Iminosuccinate contacts are provided by residues 389 to 391 (YIN) and Ser-411. Cys-484 contributes to the [4Fe-4S] cluster binding site. Residues 510–512 (HLE) and Thr-535 contribute to the iminosuccinate site. Cys-640 contributes to the [4Fe-4S] cluster binding site.

Belongs to the quinolinate synthase family. Type 1 subfamily. In terms of assembly, homodimer. Interacts in vitro with NFS2, CpNIFS3 and AO. Part of a Cys defulfurase complex. [4Fe-4S] cluster serves as cofactor. In terms of tissue distribution, expressed in roots, leaves, stems and flowers.

The protein localises to the plastid. The protein resides in the chloroplast. The enzyme catalyses iminosuccinate + dihydroxyacetone phosphate = quinolinate + phosphate + 2 H2O + H(+). It functions in the pathway cofactor biosynthesis; NAD(+) biosynthesis; quinolinate from iminoaspartate: step 1/1. Functionally, catalyzes the condensation of iminoaspartate with dihydroxyacetone phosphate to form quinolinate. Can complement nadA-deficient E.coli mutant. Essential for the de novo synthesis of NAD. Also participates in cysteine desulfurization mediated by NFS2. Can activate the cysteine desulfurase activity of NFS2 in vitro. This chain is Quinolinate synthase, chloroplastic, found in Arabidopsis thaliana (Mouse-ear cress).